A 484-amino-acid chain; its full sequence is MFPNSILGRPPFTPNHQQHNNFFALSPSLYSHQQLIDAQFSFHNADLSRAVSLQQLTYGNVSPIQTSTSPLFRGRKRLSDEKNLPLDGKRQRFHSPHQEPTIVNHIVPLSDERRYSMSPLFHTHYVPDIVRCVPPFREISILEPREITLPEAKDKLSQQILELFEACQQQVSDLKKKELCRTELQREIQLLFPQSRLFLVGSSLNGFGTRSSDGDLCLVVKEEPCFFQVNQKTEARHILTLVHKHFCTRLSGYIERPQLIRAKVPIVKFRDKVSCVEFDLNVNNIVGIRNTFLLRTYAYLENRVRPLVLVIKKWASHHDINDASRGTLSSYSLVLMVLHYLQTLPEPILPSIQKIYPESFSPSIQLHLVHQAPCNVPPYLSKNESNLGDLLLGFLKYYATEFDWNSQMISVREAKAIPRPDGIEWRNKYICVEEPFDGTNTARAVHEKQKFDMIKDQFLKSWHRLKNRKDLNSILPLRAAILKR.

A phosphoserine mark is found at Ser62 and Ser69. A Nuclear localization signal motif is present at residues 76 to 92 (KRLSDEKNLPLDGKRQR). The residue at position 95 (Ser95) is a Phosphoserine. Positions 213 and 215 each coordinate Mg(2+). The region spanning 386 to 440 (NLGDLLLGFLKYYATEFDWNSQMISVREAKAIPRPDGIEWRNKYICVEEPFDGTN) is the PAP-associated domain.

It belongs to the DNA polymerase type-B-like family. GLD2 subfamily. In terms of assembly, interacts with CPEB1, CPEB2, CPSF1 and PABPC1. Interacts with QKI isoform QKI7; promoting recruitment to miRNA miR-122 and miR-122 stabilization. Requires Mg(2+) as cofactor. It depends on Mn(2+) as a cofactor.

It is found in the cytoplasm. It localises to the nucleus. The catalysed reaction is RNA(n) + ATP = RNA(n)-3'-adenine ribonucleotide + diphosphate. Functionally, cytoplasmic poly(A) RNA polymerase that adds successive AMP monomers to the 3'-end of specific RNAs, forming a poly(A) tail. In contrast to the canonical nuclear poly(A) RNA polymerase, it only adds poly(A) to selected cytoplasmic mRNAs. Does not play a role in replication-dependent histone mRNA degradation. Adds a single nucleotide to the 3' end of specific miRNAs, monoadenylation stabilizes and prolongs the activity of some but not all miRNAs. This is Poly(A) RNA polymerase GLD2 from Bos taurus (Bovine).